Consider the following 205-residue polypeptide: Adenylyl-sulfate kinase (205 aa).

Residue 31 to 38 participates in ATP binding; that stretch reads GLSGSGKS. The active-site Phosphoserine intermediate is serine 105.

Belongs to the APS kinase family.

The enzyme catalyses adenosine 5'-phosphosulfate + ATP = 3'-phosphoadenylyl sulfate + ADP + H(+). Its pathway is sulfur metabolism; hydrogen sulfide biosynthesis; sulfite from sulfate: step 2/3. Functionally, catalyzes the synthesis of activated sulfate. In Shewanella pealeana (strain ATCC 700345 / ANG-SQ1), this protein is Adenylyl-sulfate kinase.